Here is a 101-residue protein sequence, read N- to C-terminus: Olivetolic acid cyclase (101 aa).

A Stress-response A/B barrel domain is found at 3–97; sequence VKHLIVLKFK…FWEKLLIFDY (95 aa). H5 is a 3,5,7-trioxododecanoyl-CoA binding site. The Mg(2+) site is built by V31, I34, and M37. Y72 contributes to the 3,5,7-trioxododecanoyl-CoA binding site. Residues Y72 and H75 each act as acid/base catalyst in the active site.

Homodimer. Expressed in glandular trichomes and at lower levels in female flowers.

The protein resides in the cytoplasm. The enzyme catalyses 3,5,7-trioxododecanoyl-CoA = olivetolate + CoA + H(+). Its pathway is secondary metabolite biosynthesis; terpenoid biosynthesis. In terms of biological role, involved in the biosynthesis of cannabinoids-related terpenophenolic natural products, which have pharmacological activity. Polyketide cyclase which functions in concert with OLS/TKS to form olivetolic acid. Has no intrinsic polyketide synthase activity and requires the presence of OLS to produce olivetolic acid. The polypeptide is Olivetolic acid cyclase (Cannabis sativa (Hemp)).